The chain runs to 376 residues: Formate dehydrogenase 1 (376 aa).

Substrate-binding residues include valine 97 and asparagine 121. NAD(+)-binding positions include 176–177 (RI), aspartate 197, 244–248 (PLHKD), threonine 270, aspartate 296, and 325–328 (HISG).

This sequence belongs to the D-isomer specific 2-hydroxyacid dehydrogenase family. FDH subfamily. Homodimer.

The protein resides in the cytoplasm. It catalyses the reaction formate + NAD(+) = CO2 + NADH. Catalyzes the NAD(+)-dependent oxidation of formate to carbon dioxide. Formate oxidation is the final step in the methanol oxidation pathway in methylotrophic microorganisms. Has a role in the detoxification of exogenous formate in non-methylotrophic organisms. In Saccharomyces cerevisiae (strain YJM789) (Baker's yeast), this protein is Formate dehydrogenase 1 (FDH1).